The primary structure comprises 368 residues: Probable dual-specificity RNA methyltransferase RlmN (368 aa).

The Proton acceptor role is filled by Glu-100. The 239-residue stretch at 106-344 (QHYGLSVCVT…CVVRQEHGTD (239 aa)) folds into the Radical SAM core domain. A disulfide bond links Cys-113 and Cys-349. Cys-120, Cys-124, and Cys-127 together coordinate [4Fe-4S] cluster. S-adenosyl-L-methionine is bound by residues 172–173 (GE), Ser-204, 227–229 (SLH), and Asn-305. Cys-349 functions as the S-methylcysteine intermediate in the catalytic mechanism.

Belongs to the radical SAM superfamily. RlmN family. Requires [4Fe-4S] cluster as cofactor.

It localises to the cytoplasm. It carries out the reaction adenosine(2503) in 23S rRNA + 2 reduced [2Fe-2S]-[ferredoxin] + 2 S-adenosyl-L-methionine = 2-methyladenosine(2503) in 23S rRNA + 5'-deoxyadenosine + L-methionine + 2 oxidized [2Fe-2S]-[ferredoxin] + S-adenosyl-L-homocysteine. The enzyme catalyses adenosine(37) in tRNA + 2 reduced [2Fe-2S]-[ferredoxin] + 2 S-adenosyl-L-methionine = 2-methyladenosine(37) in tRNA + 5'-deoxyadenosine + L-methionine + 2 oxidized [2Fe-2S]-[ferredoxin] + S-adenosyl-L-homocysteine. Specifically methylates position 2 of adenine 2503 in 23S rRNA and position 2 of adenine 37 in tRNAs. The polypeptide is Probable dual-specificity RNA methyltransferase RlmN (Streptococcus agalactiae serotype Ia (strain ATCC 27591 / A909 / CDC SS700)).